The following is a 162-amino-acid chain: uncharacterized protein (162 aa).

An N-terminal signal peptide occupies residues 1-23 (MLSLKSPAVLLSMVILVPLFALA).

This is an uncharacterized protein from Mycosarcoma maydis (Corn smut fungus).